Here is a 455-residue protein sequence, read N- to C-terminus: Phosphoglucosamine mutase (455 aa).

Residue S102 is the Phosphoserine intermediate of the active site. Mg(2+) is bound by residues S102, D241, D243, and D245. The residue at position 102 (S102) is a Phosphoserine.

Belongs to the phosphohexose mutase family. It depends on Mg(2+) as a cofactor. Activated by phosphorylation.

It catalyses the reaction alpha-D-glucosamine 1-phosphate = D-glucosamine 6-phosphate. Catalyzes the conversion of glucosamine-6-phosphate to glucosamine-1-phosphate. This is Phosphoglucosamine mutase from Legionella pneumophila (strain Lens).